A 127-amino-acid polypeptide reads, in one-letter code: Glycine cleavage system H protein (127 aa).

The region spanning 24 to 105 is the Lipoyl-binding domain; that stretch reads TALAGITDFA…YGEGWLVKIK (82 aa). Lysine 65 is modified (N6-lipoyllysine).

The protein belongs to the GcvH family. In terms of assembly, the glycine cleavage system is composed of four proteins: P, T, L and H. The cofactor is (R)-lipoate.

The glycine cleavage system catalyzes the degradation of glycine. The H protein shuttles the methylamine group of glycine from the P protein to the T protein. This Chlorobium phaeobacteroides (strain DSM 266 / SMG 266 / 2430) protein is Glycine cleavage system H protein.